The primary structure comprises 219 residues: Probable GTP-binding protein EngB (219 aa).

Residues 24-207 (VQPEIAFAGR…HELIESWLRP (184 aa)) form the EngB-type G domain. Residues 32-39 (GRSNAGKS), 59-63 (GRTQH), 81-84 (DLPG), 148-151 (TKCD), and 186-188 (FSA) each bind GTP. Mg(2+) is bound by residues Ser39 and Thr61.

Belongs to the TRAFAC class TrmE-Era-EngA-EngB-Septin-like GTPase superfamily. EngB GTPase family. Mg(2+) is required as a cofactor.

Its function is as follows. Necessary for normal cell division and for the maintenance of normal septation. This is Probable GTP-binding protein EngB from Burkholderia ambifaria (strain ATCC BAA-244 / DSM 16087 / CCUG 44356 / LMG 19182 / AMMD) (Burkholderia cepacia (strain AMMD)).